We begin with the raw amino-acid sequence, 257 residues long: Snake venom serine protease KN1 (257 aa).

The first 18 residues, 1–18 (MVLIRVLANLLILQLSYA), serve as a signal peptide directing secretion. Residues 19-24 (QKSSEL) constitute a propeptide that is removed on maturation. The region spanning 25–248 (VVGGHPCNIN…HLDWIKSIIA (224 aa)) is the Peptidase S1 domain. 5 disulfides stabilise this stretch: Cys-31/Cys-162, Cys-49/Cys-65, Cys-141/Cys-209, Cys-173/Cys-188, and Cys-199/Cys-224. The active-site Charge relay system is His-64. An N-linked (GlcNAc...) asparagine glycan is attached at Asn-102. Asp-109 (charge relay system) is an active-site residue. N-linked (GlcNAc...) asparagine glycans are attached at residues Asn-120 and Asn-121. Ser-203 functions as the Charge relay system in the catalytic mechanism.

Belongs to the peptidase S1 family. Snake venom subfamily. As to quaternary structure, monomer. Expressed by the venom gland.

The protein resides in the secreted. Snake venom serine protease that may act in the hemostasis system of the prey. The chain is Snake venom serine protease KN1 from Trimeresurus stejnegeri (Chinese green tree viper).